Here is a 310-residue protein sequence, read N- to C-terminus: MNVQVDMGRALAARDWRAVAALAVAMPAHAGAGTITDDDLRAAGVDRRVPEQKLGATIDEFASVRLPEQIDGEFVEGRRANLAVFDDARVAVRSHALAQRNLLERWETEHLGGTLDAAGSGGGIQPDPILQQLVDVIAQGKSDVDAYATIVEGLTKYFQSVADVMSKLQDYISAKDDKNMKIDGGKIKALIQQVIDNLPKMQLPKGADIARWRKELGDAVSISDSGVVTINPDKLIKMRDSLPPDGTVWDTARYQAWNTAFSGQKDNIQNDVQTLVEKYSHQNSNFDNLVKVLSGAISTLTDTAKSYLQI.

2 coiled-coil regions span residues 127 to 171 and 250 to 299; these read DPIL…LQDY and DTAR…AIST.

It belongs to the invasin protein D family.

It is found in the secreted. Its function is as follows. Required for invasion of epithelial cells, as well as for survival within host cells, escape from endocytic vesicles and subsequent actin-tail formation. Probably regulates the secretion of effectors BipB and BipC and their final integration into the target cell membrane. The sequence is that of Translocator protein BipD (bipD) from Burkholderia thailandensis (strain ATCC 700388 / DSM 13276 / CCUG 48851 / CIP 106301 / E264).